Here is a 217-residue protein sequence, read N- to C-terminus: ATP-dependent Clp protease proteolytic subunit 2 (217 aa).

The active-site Nucleophile is the Ser121. The active site involves His146.

This sequence belongs to the peptidase S14 family. As to quaternary structure, fourteen ClpP subunits assemble into 2 heptameric rings which stack back to back to give a disk-like structure with a central cavity, resembling the structure of eukaryotic proteasomes.

Its subcellular location is the cytoplasm. It carries out the reaction Hydrolysis of proteins to small peptides in the presence of ATP and magnesium. alpha-casein is the usual test substrate. In the absence of ATP, only oligopeptides shorter than five residues are hydrolyzed (such as succinyl-Leu-Tyr-|-NHMec, and Leu-Tyr-Leu-|-Tyr-Trp, in which cleavage of the -Tyr-|-Leu- and -Tyr-|-Trp bonds also occurs).. Its function is as follows. Cleaves peptides in various proteins in a process that requires ATP hydrolysis. Has a chymotrypsin-like activity. Plays a major role in the degradation of misfolded proteins. This chain is ATP-dependent Clp protease proteolytic subunit 2, found in Paraburkholderia xenovorans (strain LB400).